Here is a 200-residue protein sequence, read N- to C-terminus: Imidazole glycerol phosphate synthase subunit HisH (200 aa).

In terms of domain architecture, Glutamine amidotransferase type-1 spans 3-200 (DVALIDAGGA…LRNFLEMSFP (198 aa)). The active-site Nucleophile is Cys78. Residues His179 and Glu181 contribute to the active site.

As to quaternary structure, heterodimer of HisH and HisF.

The protein localises to the cytoplasm. The catalysed reaction is 5-[(5-phospho-1-deoxy-D-ribulos-1-ylimino)methylamino]-1-(5-phospho-beta-D-ribosyl)imidazole-4-carboxamide + L-glutamine = D-erythro-1-(imidazol-4-yl)glycerol 3-phosphate + 5-amino-1-(5-phospho-beta-D-ribosyl)imidazole-4-carboxamide + L-glutamate + H(+). It catalyses the reaction L-glutamine + H2O = L-glutamate + NH4(+). It participates in amino-acid biosynthesis; L-histidine biosynthesis; L-histidine from 5-phospho-alpha-D-ribose 1-diphosphate: step 5/9. Functionally, IGPS catalyzes the conversion of PRFAR and glutamine to IGP, AICAR and glutamate. The HisH subunit catalyzes the hydrolysis of glutamine to glutamate and ammonia as part of the synthesis of IGP and AICAR. The resulting ammonia molecule is channeled to the active site of HisF. In Xanthomonas axonopodis pv. citri (strain 306), this protein is Imidazole glycerol phosphate synthase subunit HisH.